The following is a 597-amino-acid chain: Coronatine-insensitive protein homolog 1b (597 aa).

Residues 22–64 (SIPEEALHLVLGYVDDPRDREAVSLVCRRWHRIDALTRKHVTV) form the F-box domain. The jasmonate site is built by arginine 92, arginine 353, tyrosine 391, arginine 414, and arginine 501.

In terms of assembly, interacts with TIFY10C/JAZ8 in a coronatine-dependent manner. Interacts with TIFY3/JAZ1, TIFY6A/JAZ3, TIFY6B/JAZ4, TIFY10A/JAZ6, TIFY10B/JAZ7, TIFY11A/JAZ9, TIFY11B/JAZ10, TIFY11C/JAZ11 and TIFY11D/JAZ12 in a coronatine-dependent manner. Expressed in roots, shoots, leaf sheaths and leaf blades.

Its function is as follows. Involved in jasmonate (JA) signaling. Required for jasmonate signaling in plant defense responses. Can complement Arabidopsis coi1-1 mutant and restore jasmonate signaling. Component of SCF(COI1) E3 ubiquitin ligase complexes, which may mediate the ubiquitination and subsequent proteasomal degradation of target proteins, including TIFY/JAZ family. The polypeptide is Coronatine-insensitive protein homolog 1b (Oryza sativa subsp. japonica (Rice)).